The chain runs to 457 residues: ATP synthase subunit beta (457 aa).

147–154 (GGAGVGKT) contributes to the ATP binding site.

The protein belongs to the ATPase alpha/beta chains family. As to quaternary structure, F-type ATPases have 2 components, CF(1) - the catalytic core - and CF(0) - the membrane proton channel. CF(1) has five subunits: alpha(3), beta(3), gamma(1), delta(1), epsilon(1). CF(0) has three main subunits: a(1), b(2) and c(9-12). The alpha and beta chains form an alternating ring which encloses part of the gamma chain. CF(1) is attached to CF(0) by a central stalk formed by the gamma and epsilon chains, while a peripheral stalk is formed by the delta and b chains.

The protein resides in the cell inner membrane. The enzyme catalyses ATP + H2O + 4 H(+)(in) = ADP + phosphate + 5 H(+)(out). Produces ATP from ADP in the presence of a proton gradient across the membrane. The catalytic sites are hosted primarily by the beta subunits. This chain is ATP synthase subunit beta, found in Haemophilus influenzae (strain PittGG).